Reading from the N-terminus, the 76-residue chain is Large ribosomal subunit protein uL29 (76 aa).

It belongs to the universal ribosomal protein uL29 family.

This chain is Large ribosomal subunit protein uL29, found in Corynebacterium efficiens (strain DSM 44549 / YS-314 / AJ 12310 / JCM 11189 / NBRC 100395).